We begin with the raw amino-acid sequence, 238 residues long: 2-C-methyl-D-erythritol 4-phosphate cytidylyltransferase (238 aa).

It belongs to the IspD/TarI cytidylyltransferase family. IspD subfamily.

It catalyses the reaction 2-C-methyl-D-erythritol 4-phosphate + CTP + H(+) = 4-CDP-2-C-methyl-D-erythritol + diphosphate. It functions in the pathway isoprenoid biosynthesis; isopentenyl diphosphate biosynthesis via DXP pathway; isopentenyl diphosphate from 1-deoxy-D-xylulose 5-phosphate: step 2/6. Functionally, catalyzes the formation of 4-diphosphocytidyl-2-C-methyl-D-erythritol from CTP and 2-C-methyl-D-erythritol 4-phosphate (MEP). In Shewanella amazonensis (strain ATCC BAA-1098 / SB2B), this protein is 2-C-methyl-D-erythritol 4-phosphate cytidylyltransferase.